The chain runs to 1816 residues: Nuclear pore complex protein Nup98-Nup96 (1816 aa).

Residues 1 to 156 (MFNKSFGTPF…LFGPSSFTAA (156 aa)) are FG repeats 1. The GLEBS; interaction with RAE1 stretch occupies residues 157–213 (PTGTTIKFNPPTGTDTMVKAGVSTNISTKHQCITAMKEYESKSLEELRLEDYQANRK). An FG repeats 2 region spans residues 214-480 (GPQNQVGAGT…NTSTAILGFG (267 aa)). The interval 512-535 (PFGDSPLFRNPMSDPKKKEERLKP) is disordered. Phosphoserine is present on S524. Residues 525 to 534 (DPKKKEERLK) are compositionally biased toward basic and acidic residues. K563 is covalently cross-linked (Glycyl lysine isopeptide (Lys-Gly) (interchain with G-Cter in SUMO2)). An N6-acetyllysine; alternate modification is found at K603. Residue K603 forms a Glycyl lysine isopeptide (Lys-Gly) (interchain with G-Cter in SUMO2); alternate linkage. 6 positions are modified to phosphoserine: S608, S612, S618, S623, S625, and S653. The tract at residues 663–682 (IAKPIPQTPESAGNKNNSSS) is disordered. A Glycyl lysine isopeptide (Lys-Gly) (interchain with G-Cter in SUMO2) cross-link involves residue K665. Phosphothreonine is present on T670. Residues 670 to 682 (TPESAGNKNNSSS) are compositionally biased toward polar residues. Residues S673, S680, S681, and S839 each carry the phosphoserine modification. The Peptidase S59 domain maps to 738–880 (KVGYYTIPSM…GSWVFKVSHF (143 aa)). Residue S881 is the Nucleophile of the active site. The interval 886 to 937 (QDSDEEEEEHPPKTTSKKLKTAPLPPAGQATTFQMTLNGKPAPPPQSQSPEV) is disordered. Residues S888, S934, S1027, S1042, S1059, and S1063 each carry the phosphoserine modification. The residue at position 1069 (T1069) is a Phosphothreonine. S1328 is modified (phosphoserine). Phosphothreonine is present on T1771.

This sequence belongs to the nucleoporin GLFG family. Part of the nuclear pore complex (NPC). Interacts directly with NUP96. Part of the Nup160 subcomplex in the nuclear pore which is composed of NUP160, NUP133, NUP107 and NUP96; this complex plays a role in RNA export and in tethering NUP98 and NUP153 to the nucleus. Interacts with RAE1. Does not interact with TPR. Interacts directly with NUP88 and NUP214, subunits of the cytoplasmic filaments of the NPC. Interacts (via N-terminus) with DHX9 (via DRBM, OB-fold and RGG domains); this interaction occurs in a RNA-dependent manner and stimulates DHX9-mediated ATPase activity. Post-translationally, the N-terminus is blocked. Isoform 1 is autoproteolytically cleaved to yield Nup98 and Nup96 or Nup98 only, respectively. Cleaved Nup98 is necessary for the targeting of Nup98 to the nuclear pore and the interaction with Nup96.

It localises to the nucleus membrane. It is found in the nucleus. The protein localises to the nuclear pore complex. The protein resides in the nucleoplasm. Functionally, plays a role in the nuclear pore complex (NPC) assembly and/or maintenance. Involved in the bidirectional transport across the NPC. May anchor NUP153 and TPR to the NPC. In terms of biological role, plays a role in the nuclear pore complex (NPC) assembly and/or maintenance. NUP98 and NUP96 are involved in the bidirectional transport across the NPC. May anchor NUP153 and TPR to the NPC. In cooperation with DHX9, plays a role in transcription and alternative splicing activation of a subset of genes. Involved in the localization of DHX9 in discrete intranuclear foci (GLFG-body). This Rattus norvegicus (Rat) protein is Nuclear pore complex protein Nup98-Nup96 (Nup98).